Consider the following 441-residue polypeptide: Amino-acid acetyltransferase (441 aa).

The N-acetyltransferase domain maps to 295–434 (EQVRRATIND…QALYNYQRRS (140 aa)).

The protein belongs to the acetyltransferase family. ArgA subfamily. As to quaternary structure, homohexamer.

Its subcellular location is the cytoplasm. The catalysed reaction is L-glutamate + acetyl-CoA = N-acetyl-L-glutamate + CoA + H(+). It functions in the pathway amino-acid biosynthesis; L-arginine biosynthesis; N(2)-acetyl-L-ornithine from L-glutamate: step 1/4. The polypeptide is Amino-acid acetyltransferase (Serratia proteamaculans (strain 568)).